Here is a 458-residue protein sequence, read N- to C-terminus: ATP synthase subunit beta (458 aa).

148-155 (GGAGVGKT) contacts ATP.

Belongs to the ATPase alpha/beta chains family. In terms of assembly, F-type ATPases have 2 components, CF(1) - the catalytic core - and CF(0) - the membrane proton channel. CF(1) has five subunits: alpha(3), beta(3), gamma(1), delta(1), epsilon(1). CF(0) has three main subunits: a(1), b(2) and c(9-12). The alpha and beta chains form an alternating ring which encloses part of the gamma chain. CF(1) is attached to CF(0) by a central stalk formed by the gamma and epsilon chains, while a peripheral stalk is formed by the delta and b chains.

Its subcellular location is the cell inner membrane. It carries out the reaction ATP + H2O + 4 H(+)(in) = ADP + phosphate + 5 H(+)(out). In terms of biological role, produces ATP from ADP in the presence of a proton gradient across the membrane. The catalytic sites are hosted primarily by the beta subunits. This chain is ATP synthase subunit beta, found in Francisella tularensis subsp. holarctica (strain FTNF002-00 / FTA).